A 547-amino-acid polypeptide reads, in one-letter code: bZIP transcription factor 29 (547 aa).

Disordered stretches follow at residues 1–199 (MGDT…SGGE), 244–312 (NSSE…DIAP), and 333–356 (GDES…TNSV). Residues 15–52 (LHSSFGTTSSSIPKNPISQLDLNPNFIRSSAPQFSKPF) show a composition bias toward polar residues. The span at 63-73 (PSHPNLIPPTS) shows a compositional bias: pro residues. The segment covering 74–89 (PFSQIPTTRQPGSHNF) has biased composition (polar residues). Basic and acidic residues predominate over residues 120 to 132 (FRDHDVSMEDRDS). Residues 134–157 (VFNSNHSLPPSPFTRCNSTSSSSL) show a composition bias toward polar residues. Basic and acidic residues predominate over residues 249–263 (DDSKNGNENRDDMES). Polar residues predominate over residues 264 to 275 (SRASGTKTNGSD). Low complexity predominate over residues 279 to 294 (ESSSVNESANNNMNSS). The span at 344 to 356 (GSMSRKVSPTNSV) shows a compositional bias: polar residues. Residues 394–457 (DPKRVKRILA…MGLTNQNNEL (64 aa)) enclose the bZIP domain. The tract at residues 396–417 (KRVKRILANRQSAARSKERKMR) is basic motif. Positions 416–469 (MRYIVELEHKVQTLQTEATTLSAQLTLLQRDMMGLTNQNNELKFRLQAMEQQAR) form a coiled coil. A leucine-zipper region spans residues 422 to 457 (LEHKVQTLQTEATTLSAQLTLLQRDMMGLTNQNNEL). The segment covering 517 to 535 (QLRQQPQQMQQQSHQQNHQ) has biased composition (low complexity). A disordered region spans residues 517–547 (QLRQQPQQMQQQSHQQNHQNGTMATKSESNE). The segment covering 536 to 547 (NGTMATKSESNE) has biased composition (polar residues).

Forms homodimers. As to expression, expressed in roots, leaves and flowers. Expressed in the root tips, lateral root primordia, and guard cells of leaves, hypocotyls and anthers.

The protein resides in the cytoplasm. It localises to the nucleus. Functionally, transcription factor that acts as a repressor of reproductive development, meristem size and plant growth. Regulates meristem size, cell size and cell number during plant development. Binds to the promoters of the cell cycle regulators CYCB1-2 and SMR4, and genes involved in cell wall organization, such as XTH9, EXPA1 and EXPA3. Possesses transactivation activity in yeast. Possesses transactivation activity in plant protoplasts. Plays a role in abiotic stress response by binding to the 5'-CAGCTG-3' DNA sequence found in the promoters of MYB44 and TRX8. Plays a role in osmosensory response by binding to the 5'-AGCTGT/G-3' DNA sequence found in the promoters of the hypoosmolarity-responsive genes CYP707A1 and CYP707A3. Binds to the 5'-AGCTGT-3' DNA sequence found in the promoter of the ZAT1 gene in response to abiotic stresses, such as oxidative stress, high-light, osmotic shock, salt and heat stresses. This Arabidopsis thaliana (Mouse-ear cress) protein is bZIP transcription factor 29.